The following is a 724-amino-acid chain: Peroxidase mlt-7 (724 aa).

An N-terminal signal peptide occupies residues 1-24 (MRRLHRNLSLLFLICILNEYRIES). The N-linked (GlcNAc...) asparagine glycan is linked to Asn7. The propeptide occupies 25-178 (QTLSPPITDR…GCVPQLSDVG (154 aa)). The ShKT domain maps to 42–76 (CCDHHEWCRFWASIGECNANKDWMTENCQLACGTC). Cys181 and Cys198 are joined by a disulfide. Residue Asn233 is glycosylated (N-linked (GlcNAc...) asparagine). The active-site Proton acceptor is the His271. Asp272 lines the Ca(2+) pocket. A disulfide bridge connects residues Cys284 and Cys294. Residues Thr335, Tyr337, Asp339, and Ser341 each coordinate Ca(2+). Residue His493 coordinates heme b. Residues Asn509 and Asn617 are each glycosylated (N-linked (GlcNAc...) asparagine). Intrachain disulfides connect Cys588/Cys645 and Cys686/Cys710.

It belongs to the peroxidase family. It depends on heme b as a cofactor. Expressed in the hypodermal cells, specifically the head and seam/body.

It catalyses the reaction 2 a phenolic donor + H2O2 = 2 a phenolic radical donor + 2 H2O. Its function is as follows. Plays an essential role in cuticle biogenesis. Required in combination with bli-3 for correct formation of cross-links in cuticle collagens. The chain is Peroxidase mlt-7 from Caenorhabditis elegans.